Here is a 482-residue protein sequence, read N- to C-terminus: Probable cytosol aminopeptidase (482 aa).

Lys251 and Asp256 together coordinate Mn(2+). Lys263 is an active-site residue. Residues Asp274, Asp333, and Glu335 each coordinate Mn(2+). Arg337 is a catalytic residue.

The protein belongs to the peptidase M17 family. The cofactor is Mn(2+).

The protein resides in the cytoplasm. It carries out the reaction Release of an N-terminal amino acid, Xaa-|-Yaa-, in which Xaa is preferably Leu, but may be other amino acids including Pro although not Arg or Lys, and Yaa may be Pro. Amino acid amides and methyl esters are also readily hydrolyzed, but rates on arylamides are exceedingly low.. The catalysed reaction is Release of an N-terminal amino acid, preferentially leucine, but not glutamic or aspartic acids.. Functionally, presumably involved in the processing and regular turnover of intracellular proteins. Catalyzes the removal of unsubstituted N-terminal amino acids from various peptides. In Acinetobacter baumannii (strain SDF), this protein is Probable cytosol aminopeptidase.